A 313-amino-acid polypeptide reads, in one-letter code: Protoheme IX farnesyltransferase (313 aa).

The next 9 helical transmembrane spans lie at 22–42, 46–66, 98–118, 121–141, 150–170, 177–197, 223–243, 246–266, and 284–304; these read FALL…VGLM, IGVH…GGGA, GEAL…LALA, VFAG…YTMW, IVIG…AATG, WLMF…LALF, ILVY…TSVG, IYLT…VQIW, and FFKL…AEAL.

Belongs to the UbiA prenyltransferase family. Protoheme IX farnesyltransferase subfamily. In terms of assembly, interacts with CtaA.

The protein resides in the cell inner membrane. The enzyme catalyses heme b + (2E,6E)-farnesyl diphosphate + H2O = Fe(II)-heme o + diphosphate. Its pathway is porphyrin-containing compound metabolism; heme O biosynthesis; heme O from protoheme: step 1/1. Functionally, converts heme B (protoheme IX) to heme O by substitution of the vinyl group on carbon 2 of heme B porphyrin ring with a hydroxyethyl farnesyl side group. The polypeptide is Protoheme IX farnesyltransferase (Ruegeria sp. (strain TM1040) (Silicibacter sp.)).